Reading from the N-terminus, the 88-residue chain is YcgL domain-containing protein CGSHiGG_01115 (88 aa).

Residues methionine 1–serine 85 form the YcgL domain.

This chain is YcgL domain-containing protein CGSHiGG_01115, found in Haemophilus influenzae (strain PittGG).